A 177-amino-acid chain; its full sequence is Large ribosomal subunit protein uL6 (177 aa).

Belongs to the universal ribosomal protein uL6 family. In terms of assembly, part of the 50S ribosomal subunit.

In terms of biological role, this protein binds to the 23S rRNA, and is important in its secondary structure. It is located near the subunit interface in the base of the L7/L12 stalk, and near the tRNA binding site of the peptidyltransferase center. This Sphingopyxis alaskensis (strain DSM 13593 / LMG 18877 / RB2256) (Sphingomonas alaskensis) protein is Large ribosomal subunit protein uL6.